Here is a 202-residue protein sequence, read N- to C-terminus: Imidazoleglycerol-phosphate dehydratase (202 aa).

It belongs to the imidazoleglycerol-phosphate dehydratase family.

Its subcellular location is the cytoplasm. It carries out the reaction D-erythro-1-(imidazol-4-yl)glycerol 3-phosphate = 3-(imidazol-4-yl)-2-oxopropyl phosphate + H2O. It functions in the pathway amino-acid biosynthesis; L-histidine biosynthesis; L-histidine from 5-phospho-alpha-D-ribose 1-diphosphate: step 6/9. This chain is Imidazoleglycerol-phosphate dehydratase, found in Rhizobium meliloti (strain 1021) (Ensifer meliloti).